We begin with the raw amino-acid sequence, 316 residues long: tRNA dimethylallyltransferase (316 aa).

17–24 (GPTASGKT) provides a ligand contact to ATP. 19 to 24 (TASGKT) lines the substrate pocket. Interaction with substrate tRNA regions lie at residues 42–45 (DSAL), 166–170 (QRLSR), 247–252 (RCVGYR), and 280–287 (KRQITWLR).

Belongs to the IPP transferase family. As to quaternary structure, monomer. The cofactor is Mg(2+).

The catalysed reaction is adenosine(37) in tRNA + dimethylallyl diphosphate = N(6)-dimethylallyladenosine(37) in tRNA + diphosphate. Functionally, catalyzes the transfer of a dimethylallyl group onto the adenine at position 37 in tRNAs that read codons beginning with uridine, leading to the formation of N6-(dimethylallyl)adenosine (i(6)A). This Cronobacter sakazakii (strain ATCC BAA-894) (Enterobacter sakazakii) protein is tRNA dimethylallyltransferase.